The chain runs to 191 residues: Protein Ves (191 aa).

The protein belongs to the Ves family.

This is Protein Ves from Shigella flexneri serotype 5b (strain 8401).